Here is a 620-residue protein sequence, read N- to C-terminus: 1-deoxy-D-xylulose-5-phosphate synthase (620 aa).

Thiamine diphosphate-binding positions include histidine 80 and 121-123; that span reads GHS. Aspartate 152 lines the Mg(2+) pocket. Residues 153 to 154, asparagine 181, tyrosine 288, and glutamate 370 contribute to the thiamine diphosphate site; that span reads GA. Asparagine 181 serves as a coordination point for Mg(2+).

This sequence belongs to the transketolase family. DXPS subfamily. In terms of assembly, homodimer. Mg(2+) serves as cofactor. It depends on thiamine diphosphate as a cofactor.

The enzyme catalyses D-glyceraldehyde 3-phosphate + pyruvate + H(+) = 1-deoxy-D-xylulose 5-phosphate + CO2. Its pathway is metabolic intermediate biosynthesis; 1-deoxy-D-xylulose 5-phosphate biosynthesis; 1-deoxy-D-xylulose 5-phosphate from D-glyceraldehyde 3-phosphate and pyruvate: step 1/1. Catalyzes the acyloin condensation reaction between C atoms 2 and 3 of pyruvate and glyceraldehyde 3-phosphate to yield 1-deoxy-D-xylulose-5-phosphate (DXP). In Salmonella paratyphi A (strain ATCC 9150 / SARB42), this protein is 1-deoxy-D-xylulose-5-phosphate synthase.